We begin with the raw amino-acid sequence, 188 residues long: Protein CRIPTO3 (188 aa).

An EGF-like domain is found at Leu78–Glu107. N-linked (GlcNAc...) asparagine glycosylation occurs at Asn79. 6 disulfides stabilise this stretch: Cys82–Cys89, Cys83–Cys95, Cys97–Cys106, Cys115–Cys133, Cys128–Cys149, and Cys131–Cys140.

The protein belongs to the EGF-CFC (Cripto-1/FRL1/Cryptic) family. Expressed weakly in lung, colon and breast. Expressed also strongly in primary cancer tissues; lung and colon cancers.

It localises to the cell membrane. In terms of biological role, could play a role in the determination of the epiblastic cells that subsequently give rise to the mesoderm. Activates the Nodal-dependent signaling pathway. The chain is Protein CRIPTO3 from Homo sapiens (Human).